The following is a 229-amino-acid chain: 2,3-bisphosphoglycerate-dependent phosphoglycerate mutase 2 (229 aa).

Substrate-binding positions include 12 to 19, 25 to 26, R65, 92 to 95, K103, and 119 to 120; these read RHGESVAN, TG, ERHY, and RR. The Tele-phosphohistidine intermediate role is filled by H13. E92 (proton donor/acceptor) is an active-site residue.

It belongs to the phosphoglycerate mutase family. BPG-dependent PGAM subfamily.

The catalysed reaction is (2R)-2-phosphoglycerate = (2R)-3-phosphoglycerate. The protein operates within carbohydrate degradation; glycolysis; pyruvate from D-glyceraldehyde 3-phosphate: step 3/5. Its function is as follows. Catalyzes the interconversion of 2-phosphoglycerate and 3-phosphoglycerate. This Lactobacillus johnsonii (strain CNCM I-12250 / La1 / NCC 533) protein is 2,3-bisphosphoglycerate-dependent phosphoglycerate mutase 2.